A 248-amino-acid chain; its full sequence is tRNA (guanine-N(1)-)-methyltransferase (248 aa).

Residues Gly-117 and 137–142 (IGDFVL) contribute to the S-adenosyl-L-methionine site.

It belongs to the RNA methyltransferase TrmD family. In terms of assembly, homodimer.

It is found in the cytoplasm. It carries out the reaction guanosine(37) in tRNA + S-adenosyl-L-methionine = N(1)-methylguanosine(37) in tRNA + S-adenosyl-L-homocysteine + H(+). Functionally, specifically methylates guanosine-37 in various tRNAs. The protein is tRNA (guanine-N(1)-)-methyltransferase of Polynucleobacter asymbioticus (strain DSM 18221 / CIP 109841 / QLW-P1DMWA-1) (Polynucleobacter necessarius subsp. asymbioticus).